Consider the following 341-residue polypeptide: Tetraacyldisaccharide 4'-kinase (341 aa).

54–61 (TVGGAGKT) provides a ligand contact to ATP.

This sequence belongs to the LpxK family.

It carries out the reaction a lipid A disaccharide + ATP = a lipid IVA + ADP + H(+). It functions in the pathway glycolipid biosynthesis; lipid IV(A) biosynthesis; lipid IV(A) from (3R)-3-hydroxytetradecanoyl-[acyl-carrier-protein] and UDP-N-acetyl-alpha-D-glucosamine: step 6/6. In terms of biological role, transfers the gamma-phosphate of ATP to the 4'-position of a tetraacyldisaccharide 1-phosphate intermediate (termed DS-1-P) to form tetraacyldisaccharide 1,4'-bis-phosphate (lipid IVA). The polypeptide is Tetraacyldisaccharide 4'-kinase (Brucella suis (strain ATCC 23445 / NCTC 10510)).